A 293-amino-acid polypeptide reads, in one-letter code: Small ribosomal subunit biogenesis GTPase RsgA (293 aa).

The CP-type G domain maps to 63 to 223; sequence KNWLVRPPIA…VADTPGFSAL (161 aa). GTP-binding positions include 112 to 115 and 166 to 174; these read NKMD and GQSGVGKSS. Positions 247, 252, 254, and 260 each coordinate Zn(2+).

The protein belongs to the TRAFAC class YlqF/YawG GTPase family. RsgA subfamily. Monomer. Associates with 30S ribosomal subunit, binds 16S rRNA. It depends on Zn(2+) as a cofactor.

The protein resides in the cytoplasm. Functionally, one of several proteins that assist in the late maturation steps of the functional core of the 30S ribosomal subunit. Helps release RbfA from mature subunits. May play a role in the assembly of ribosomal proteins into the subunit. Circularly permuted GTPase that catalyzes slow GTP hydrolysis, GTPase activity is stimulated by the 30S ribosomal subunit. The sequence is that of Small ribosomal subunit biogenesis GTPase RsgA from Geobacillus sp. (strain WCH70).